A 626-amino-acid polypeptide reads, in one-letter code: Lipoprotein LpqB (626 aa).

Positions 1–23 are cleaved as a signal peptide; sequence MIGQANRIAAAVSTACLAVLLAG. Cys24 is lipidated: N-palmitoyl cysteine. A lipid anchor (S-diacylglycerol cysteine) is attached at Cys24. The segment at 428-457 is disordered; that stretch reads EAEREEDLADDTEPGDTAVGSTERRETDRG. A compositionally biased stretch (acidic residues) spans 430 to 441; sequence EREEDLADDTEP.

This sequence belongs to the LpqB lipoprotein family.

Its subcellular location is the cell membrane. The polypeptide is Lipoprotein LpqB (Thermobifida fusca (strain YX)).